Reading from the N-terminus, the 185-residue chain is Ribosome maturation factor RimM (185 aa).

A PRC barrel domain is found at Glu-106–Phe-185.

Belongs to the RimM family. In terms of assembly, binds ribosomal protein uS19.

It localises to the cytoplasm. Functionally, an accessory protein needed during the final step in the assembly of 30S ribosomal subunit, possibly for assembly of the head region. Essential for efficient processing of 16S rRNA. May be needed both before and after RbfA during the maturation of 16S rRNA. It has affinity for free ribosomal 30S subunits but not for 70S ribosomes. In Shigella dysenteriae serotype 1 (strain Sd197), this protein is Ribosome maturation factor RimM.